Reading from the N-terminus, the 382-residue chain is Lipid-A-disaccharide synthase (382 aa).

The protein belongs to the LpxB family.

It carries out the reaction 2-N,3-O-bis[(3R)-3-hydroxytetradecanoyl]-alpha-D-glucosaminyl 1-phosphate + UDP-2-N,3-O-bis[(3R)-3-hydroxytetradecanoyl]-alpha-D-glucosamine = lipid A disaccharide (E. coli) + UDP + H(+). The enzyme catalyses a lipid X + a UDP-2-N,3-O-bis[(3R)-3-hydroxyacyl]-alpha-D-glucosamine = a lipid A disaccharide + UDP + H(+). The protein operates within glycolipid biosynthesis; lipid IV(A) biosynthesis; lipid IV(A) from (3R)-3-hydroxytetradecanoyl-[acyl-carrier-protein] and UDP-N-acetyl-alpha-D-glucosamine: step 5/6. Its function is as follows. Condensation of UDP-2,3-diacylglucosamine and 2,3-diacylglucosamine-1-phosphate to form lipid A disaccharide, a precursor of lipid A, a phosphorylated glycolipid that anchors the lipopolysaccharide to the outer membrane of the cell. This is Lipid-A-disaccharide synthase from Salmonella heidelberg (strain SL476).